A 483-amino-acid polypeptide reads, in one-letter code: GDP-fucose protein O-fucosyltransferase 3 (483 aa).

Residues 1–8 (MVRIPRRK) are Cytoplasmic-facing. The chain crosses the membrane as a helical; Signal-anchor for type II membrane protein span at residues 9 to 31 (LLPSCLCMTATVFLMVTVQVLVE). Residues 32–483 (LGKFERKKFK…FWALVFKDSF (452 aa)) are Lumenal-facing. Positions 45-64 (LQDGQKDVEGDPKHLNPLPK) are disordered. N-linked (GlcNAc...) asparagine glycosylation is found at N110, N168, and N318. C389 and C392 form a disulfide bridge. N-linked (GlcNAc...) asparagine glycosylation is present at N468.

Belongs to the glycosyltransferase 10 family.

It is found in the endoplasmic reticulum membrane. It catalyses the reaction L-threonyl-[protein] + GDP-beta-L-fucose = 3-O-(alpha-L-fucosyl)-L-threonyl-[protein] + GDP + H(+). It carries out the reaction L-seryl-[protein] + GDP-beta-L-fucose = 3-O-(alpha-L-fucosyl)-L-seryl-[protein] + GDP + H(+). It participates in protein modification; protein glycosylation. Its function is as follows. Protein O-fucosyltransferase that specifically catalyzes O-fucosylation of serine or threonine residues in EMI domains of target proteins, such as MMRN1, MMRN2 and EMID1. Attaches fucose through an O-glycosidic linkage. O-fucosylation of EMI domain-containing proteins may be required for facilitating protein folding and secretion. May also show alpha-(1,3)-fucosyltransferase activity toward the innermost N-acetyl glucosamine (GlcNAc) residue in biantennary N-glycan acceptors. However, this was tested with a library of synthetic substrates and this activity is unsure in vivo. May be involved in biosynthesis of Lewis X-carrying biantennary N-glycans that regulate neuron stem cell self-renewal during brain development. The polypeptide is GDP-fucose protein O-fucosyltransferase 3 (Fut10) (Rattus norvegicus (Rat)).